Reading from the N-terminus, the 488-residue chain is Glutamyl-tRNA(Gln) amidotransferase subunit A (488 aa).

Residues K77 and S152 each act as charge relay system in the active site. Residue S176 is the Acyl-ester intermediate of the active site.

It belongs to the amidase family. GatA subfamily. Heterotrimer of A, B and C subunits.

It carries out the reaction L-glutamyl-tRNA(Gln) + L-glutamine + ATP + H2O = L-glutaminyl-tRNA(Gln) + L-glutamate + ADP + phosphate + H(+). In terms of biological role, allows the formation of correctly charged Gln-tRNA(Gln) through the transamidation of misacylated Glu-tRNA(Gln) in organisms which lack glutaminyl-tRNA synthetase. The reaction takes place in the presence of glutamine and ATP through an activated gamma-phospho-Glu-tRNA(Gln). The chain is Glutamyl-tRNA(Gln) amidotransferase subunit A from Streptococcus pneumoniae (strain JJA).